The primary structure comprises 2839 residues: Bifunctional DNA-directed RNA polymerase subunit beta-beta' (2839 aa).

The tract at residues 1–1433 (MVDSSYMCAS…CLNVALKQNN (1433 aa)) is DNA-directed RNA polymerase subunit beta. Residues 1436 to 2839 (IEDISHTNIA…KESVAESRYN (1404 aa)) form a DNA-directed RNA polymerase subunit beta' region. Residues C1501, C1503, C1516, and C1519 each coordinate Zn(2+). Mg(2+)-binding residues include D1893, D1895, and D1897. Zn(2+) contacts are provided by C2238, C2312, C2319, and C2322.

This sequence in the N-terminal section; belongs to the RNA polymerase beta chain family. In the C-terminal section; belongs to the RNA polymerase beta' chain family. The RNAP catalytic core consists of 2 alpha, 1 beta/beta' and 1 omega subunit. When a sigma factor is associated with the core the holoenzyme is formed, which can initiate transcription. Mg(2+) is required as a cofactor. Requires Zn(2+) as cofactor.

It carries out the reaction RNA(n) + a ribonucleoside 5'-triphosphate = RNA(n+1) + diphosphate. Functionally, DNA-dependent RNA polymerase catalyzes the transcription of DNA into RNA using the four ribonucleoside triphosphates as substrates. This chain is Bifunctional DNA-directed RNA polymerase subunit beta-beta' (rpoBC), found in Wolbachia sp. subsp. Brugia malayi (strain TRS).